Consider the following 301-residue polypeptide: Thyrotroph embryonic factor (301 aa).

Disordered stretches follow at residues 1 to 70 (MSDA…ASTM) and 130 to 174 (ESAS…DPSC). Serine 30 carries the post-translational modification Phosphoserine. Positions 39 to 59 (KLMENPPRETRLDKEKGKEKL) are enriched in basic and acidic residues. Residues 131-158 (SASSSTASPPSSSTAIFQPSETVSSTES) are compositionally biased toward low complexity. In terms of domain architecture, bZIP spans 231–294 (DEKYWTRRKK…GKCKTIVSKY (64 aa)). Residues 233–253 (KYWTRRKKNNVAAKRSRDARR) form a basic motif region. Residues 254–261 (LKENQITI) are leucine-zipper.

The protein belongs to the bZIP family. PAR subfamily. Binds DNA as a homodimer or a heterodimer. Can form a heterodimer with DBP. In terms of tissue distribution, isoform Alpha and isoform Beta are expressed at high levels in lung, bladder, kidney, gut and brain.

The protein localises to the nucleus. Its function is as follows. Transcription factor that binds to and transactivates the TSHB promoter. Binds to a minimal DNA-binding sequence 5'-[TC][AG][AG]TTA[TC][AG]-3'. Also activates the telokin promoter in smooth muscle-specific and calcium-dependent manner. In Mus musculus (Mouse), this protein is Thyrotroph embryonic factor (Tef).